We begin with the raw amino-acid sequence, 1073 residues long: Envelopment polyprotein (1073 aa).

An N-terminal signal peptide occupies residues 1–19 (MMKVIWFSSLICFVIQCSG). The Lumenal segment spans residues 20–453 (DSGPIICAGP…NPQCYPAKKW (434 aa)). The cysteines at positions 26 and 49 are disulfide-linked. Residues N33 and N63 are each glycosylated (N-linked (GlcNAc...) asparagine; by host). 10 disulfide bridges follow: C143/C156, C180/C327, C206/C216, C258/C305, C266/C303, C274/C280, C287/C292, C349/C352, C356/C424, and C376/C381. The helical transmembrane segment at 454–474 (LFIIIVILLGYAGLMLLTNVL) threads the bilayer. Positions 475-521 (KAIGIWGSWVIAPVKLMFAIIKKLMRTVSCLMRKLMDRGRQVIHEEI) are golgi retention signal. At 475–535 (KAIGIWGSWV…EGNQDDVRIE (61 aa)) the chain is on the cytoplasmic side. The interval 536–562 (MARPRRVRHWMYSPVILTILAIGLAES) is internal signal sequence for glycoprotein C. 10 cysteine pairs are disulfide-bonded: C563/C604, C576/C586, C629/C725, C644/C841, C650/C698, C656/C705, C660/C687, C691/C696, C778/C793, and C809/C823. Topologically, residues 563 to 1036 (CDEMVHADSK…ALFGNGLSRW (474 aa)) are lumenal. Residues 650 to 656 (CRWAGDC) form a fusion loop region. Residues 691 to 705 (CGGAACGCFNAAPSC) form a fusion loop region. N853 and N914 each carry an N-linked (GlcNAc...) asparagine; by host glycan. Disulfide bonds link C908–C978, C918–C921, and C943–C974. Residue N936 is glycosylated (N-linked (GlcNAc...) asparagine; by host). A helical membrane pass occupies residues 1037 to 1057 (ILGVIGVLLGGLALFFMIMSL). Residues 1058–1073 (FKLGTKQVFRSRTKLA) lie on the Cytoplasmic side of the membrane.

Belongs to the phlebovirus envelope glycoprotein family. As to quaternary structure, homodimer. Heterodimer with glycoprotein C. Homotrimer (postfusion). In terms of assembly, heterodimer with glycoprotein N. Post-translationally, specific enzymatic cleavages in vivo yield mature proteins including glycoprotein C and glycoprotein N. In terms of processing, the cytoplasmic tail is Palmitoylated. Glycosylated. Post-translationally, palmitoylated.

It localises to the virion membrane. Its subcellular location is the host Golgi apparatus membrane. The protein resides in the host endoplasmic reticulum membrane. In terms of biological role, structural component of the virion that interacts with glycoprotein C. It shields the hydrophobic fusion loops of the glycoprotein C, preventing premature fusion. The glycoprotein protrusions are arranged on an icosahedral lattice, with T=12 triangulation. They are able to attach the virion to the host cell receptor CD209/DC-SIGN and to promote fusion of membranes with the late endosome after clathrin-mediated endocytosis of the virion. Plays a role in the packaging of ribonucleoproteins during virus assembly. Its function is as follows. Structural component of the virion that interacts with glycoprotein N. Acts as a class II fusion protein that is activated upon acidification and subsequent repositioning of the glycoprotein N. The glycoprotein protrusions are arranged on an icosahedral lattice, with T=12 triangulation. They are able to attach the virion to the host cell receptor CD209/DC-SIGN and to promote fusion of membranes with the late endosome after clathrin-mediated endocytosis of the virion. The protein is Envelopment polyprotein of Dabie bandavirus (Severe fever with thrombocytopenia virus).